A 129-amino-acid chain; its full sequence is Small ribosomal subunit protein uS8c (129 aa).

The protein belongs to the universal ribosomal protein uS8 family. As to quaternary structure, part of the 30S ribosomal subunit.

It is found in the plastid. The protein resides in the chloroplast. One of the primary rRNA binding proteins, it binds directly to 16S rRNA central domain where it helps coordinate assembly of the platform of the 30S subunit. This is Small ribosomal subunit protein uS8c (rps8) from Oltmannsiellopsis viridis (Marine flagellate).